The primary structure comprises 257 residues: Capsid protein (257 aa).

The Bipartite nuclear localization signal motif lies at 3–20; it reads KRTGDILMSSPLSKFRRK. A Nuclear localization signal motif is present at residues 40–54; that stretch reads KRRSWTYRPMYRKPR. A zinc finger lies at 68–85; the sequence is CEGPCKVQSYEQRDDVKH. A Nuclear export signal motif is present at residues 101–122; the sequence is ITHRVGKRFCIKSIYILGKIWM. The short motif at 201 to 248 is the Bipartite nuclear localization signal element; the sequence is KRFFKVNTHVVYNHQEQAKYENHTENALLLYMACTHASNPVYATLKIR.

This sequence belongs to the geminiviridae capsid protein family. In terms of assembly, homomultimer. Binds to single-stranded and double-stranded viral DNA. Interacts (via nuclear localization signals) with host importin alpha-1a.

It localises to the virion. The protein resides in the host nucleus. Encapsidates the viral genome into characteristic twinned ('geminate') particles. Binds the genomic viral ssDNA and shuttles it into and out of the cell nucleus. Plays a role in protection of the genome from degradation, virus acquisition and transmission by insect vectors, infectivity, and systemic movement. The CP of monopartite geminiviruses is absolutely essential for virus movement. This Solanum lycopersicum (Tomato) protein is Capsid protein.